The sequence spans 525 residues: PE-PGRS family protein PE_PGRS47 (525 aa).

In terms of domain architecture, PE spans 1–93 (MSFVIAAPEF…AYSYASAEAA (93 aa)). A disordered region spans residues 506 to 525 (VGGAGGLLEGQNGENGLLPS). A compositionally biased stretch (low complexity) spans 514-525 (EGQNGENGLLPS).

Belongs to the mycobacterial PE family. PGRS subfamily.

It is found in the secreted. The protein resides in the cell surface. It localises to the host cytoplasm. Its subcellular location is the host cytosol. Contributes to evasion of both innate and adaptive immunity. Inhibits autophagy in infected host phagocytes and inhibits major histocompatibility complex (MHC) class II antigen presentation by mycobacteria-infected dendritic cells. Has an important role in the growth and survival of M.tuberculosis, particularly during intracellular growth and in the later chronic phase of infection. The polypeptide is PE-PGRS family protein PE_PGRS47 (Mycobacterium tuberculosis (strain ATCC 25618 / H37Rv)).